The following is a 108-amino-acid chain: UPF0060 membrane protein DSY4629 (108 aa).

The next 4 helical transmembrane spans lie at 5–25, 31–51, 60–80, and 86–106; these read IILF…VWLW, PFWY…IPTL, VYAA…WGID, and NYDW…LWAP.

The protein belongs to the UPF0060 family.

Its subcellular location is the cell membrane. The chain is UPF0060 membrane protein DSY4629 from Desulfitobacterium hafniense (strain Y51).